A 332-amino-acid chain; its full sequence is Glyceraldehyde-3-phosphate dehydrogenase 1 (332 aa).

The NAD(+) site is built by Arg-11, Ile-12, Asp-33, and Thr-120. D-glyceraldehyde 3-phosphate-binding positions include Ser-149–Thr-151, Thr-180, Thr-209–Gly-210, and Arg-232. Cys-150 serves as the catalytic Nucleophile. NAD(+) is bound by residues Asn-314 and Tyr-318.

Belongs to the glyceraldehyde-3-phosphate dehydrogenase family. In terms of assembly, homotetramer.

Its subcellular location is the cytoplasm. It carries out the reaction D-glyceraldehyde 3-phosphate + phosphate + NAD(+) = (2R)-3-phospho-glyceroyl phosphate + NADH + H(+). The catalysed reaction is NADH + H2O = (6R)-NADHX. It catalyses the reaction NADH + H2O = (6S)-NADHX. The enzyme catalyses NADPH + H2O = (6R)-NADPHX. It carries out the reaction NADPH + H2O = (6S)-NADPHX. The protein operates within carbohydrate degradation; glycolysis; pyruvate from D-glyceraldehyde 3-phosphate: step 1/5. Its function is as follows. Glyceraldehyde-3-phosphate dehydrogenase (GAPDH) involved in glycolysis and gluconeogenesis. Catalyzes the reaction of glyceraldehyde-3-phosphate to 1,3 bis-phosphoglycerate. The contribution of the TDH1, TDH2, and TDH3 to the total glyceraldehyde-3-phosphate dehydrogenase activity is 10-15, 25-30, and 50-60%, respectively. May be involved in a process other than glycolysis because it is synthesized by cells in stationary phase. Functionally, as a side activity, catalyzes the hydration of the nicotinamide ring of NADH or NADPH at the C6 position to give the corresponding hydrates, NADHX and NADPHX, which exist as R and S epimers, that cannot act as electron donors or acceptors and inhibit several dehydrogenases, making them toxic. This chain is Glyceraldehyde-3-phosphate dehydrogenase 1, found in Saccharomyces cerevisiae (strain ATCC 204508 / S288c) (Baker's yeast).